The following is a 418-amino-acid chain: Probable aminotransferase Rv1178 (418 aa).

The tract at residues 22-42 (GQGWHDRERPASGQGSGAAER) is disordered.

Belongs to the class-I pyridoxal-phosphate-dependent aminotransferase family. The cofactor is pyridoxal 5'-phosphate.

This Mycobacterium tuberculosis (strain ATCC 25618 / H37Rv) protein is Probable aminotransferase Rv1178.